A 330-amino-acid polypeptide reads, in one-letter code: Aspartate--ammonia ligase (330 aa).

This sequence belongs to the class-II aminoacyl-tRNA synthetase family. AsnA subfamily.

Its subcellular location is the cytoplasm. It carries out the reaction L-aspartate + NH4(+) + ATP = L-asparagine + AMP + diphosphate + H(+). It functions in the pathway amino-acid biosynthesis; L-asparagine biosynthesis; L-asparagine from L-aspartate (ammonia route): step 1/1. The sequence is that of Aspartate--ammonia ligase from Escherichia coli O7:K1 (strain IAI39 / ExPEC).